Here is a 101-residue protein sequence, read N- to C-terminus: Urease subunit beta (101 aa).

The protein belongs to the urease beta subunit family. In terms of assembly, heterotrimer of UreA (gamma), UreB (beta) and UreC (alpha) subunits. Three heterotrimers associate to form the active enzyme.

The protein localises to the cytoplasm. The catalysed reaction is urea + 2 H2O + H(+) = hydrogencarbonate + 2 NH4(+). The protein operates within nitrogen metabolism; urea degradation; CO(2) and NH(3) from urea (urease route): step 1/1. The sequence is that of Urease subunit beta from Haemophilus influenzae (strain 86-028NP).